The following is a 138-amino-acid chain: ATP synthase epsilon chain (138 aa).

This sequence belongs to the ATPase epsilon chain family. F-type ATPases have 2 components, CF(1) - the catalytic core - and CF(0) - the membrane proton channel. CF(1) has five subunits: alpha(3), beta(3), gamma(1), delta(1), epsilon(1). CF(0) has three main subunits: a, b and c.

Its subcellular location is the cell inner membrane. Functionally, produces ATP from ADP in the presence of a proton gradient across the membrane. This is ATP synthase epsilon chain from Citrifermentans bemidjiense (strain ATCC BAA-1014 / DSM 16622 / JCM 12645 / Bem) (Geobacter bemidjiensis).